Here is a 393-residue protein sequence, read N- to C-terminus: MFRYLTAGESHGPQLTAIIEGIPAGLKLSEESINVDLARRQGGYGRGGRMAIEKDQVEILSGVRWGKTIGSPITLCVKNRDWTNWQEKMSPQERFRDDNIHVTRSRPGHADLPGAMKYDHKDVRNILERSSARETAVRVAVGSVAKALLQHFEIYLCGYVAELGGIKAKRPELCPAELRATIAKSELYTCDSAVEGEMKKLIDEVKAAGDTVGGVVEVIASGVPAGLGSHVQWDRKLDARIAMAMMSIQAFKGVEIGLGFEAAARKGSNVHDEIFYDQSRASQGSMTGYYRLTNNAGGIEGGITNGEDILVRAAMKPIPTLYKPLRSVDIVSKEPFEATVERSDVCAVPAASVVAESVLAIELADAFMVKFGGDSIEEMQRNYAGYLEYLKNF.

Residues arginine 40 and arginine 46 each contribute to the NADP(+) site. Residues 129–131, 249–250, glycine 301, 316–320, and arginine 342 contribute to the FMN site; these read RSS, QA, and KPIPT.

Belongs to the chorismate synthase family. As to quaternary structure, homotetramer. It depends on FMNH2 as a cofactor.

The catalysed reaction is 5-O-(1-carboxyvinyl)-3-phosphoshikimate = chorismate + phosphate. It functions in the pathway metabolic intermediate biosynthesis; chorismate biosynthesis; chorismate from D-erythrose 4-phosphate and phosphoenolpyruvate: step 7/7. In terms of biological role, catalyzes the anti-1,4-elimination of the C-3 phosphate and the C-6 proR hydrogen from 5-enolpyruvylshikimate-3-phosphate (EPSP) to yield chorismate, which is the branch point compound that serves as the starting substrate for the three terminal pathways of aromatic amino acid biosynthesis. This reaction introduces a second double bond into the aromatic ring system. This is Chorismate synthase from Geotalea daltonii (strain DSM 22248 / JCM 15807 / FRC-32) (Geobacter daltonii).